Consider the following 200-residue polypeptide: MSIKTLTLYNFNTSYSFGKEEKKEKEQSLTSKLARLKDSYEKEGLRKAVEGIIIIHDHGHPHILLLQDNNYFKLPGGKLKPGENEIDGLIRKLTKKLSPTGTPVSDAPWEIGDHVSTWWRPNFEPSLFPYIPSHITKPKECKKLFVVTLPEKCKFAVSNNLSLIAVSLYEIYNNSQRYGAVISSIPALISRYTFVYLNVD.

In terms of domain architecture, Nudix hydrolase spans 45 to 170; sequence LRKAVEGIII…LSLIAVSLYE (126 aa). Positions 70-72 are interaction with RNA; that stretch reads NYF. The short motif at 77–98 is the Nudix box element; that stretch reads GKLKPGENEIDGLIRKLTKKLS.

This sequence belongs to the Nudix hydrolase family. CPSF5 subfamily. In terms of assembly, homodimer (via N- and C-terminus); binds RNA as homodimer. Component of the cleavage factor Im (CFIm) complex.

The protein localises to the nucleus. It is found in the cytoplasm. Its function is as follows. Component of the cleavage factor Im (CFIm) complex that functions as an activator of the pre-mRNA 3'-end cleavage and polyadenylation processing required for the maturation of pre-mRNA into functional mRNAs. CFIm contributes to the recruitment of multiprotein complexes on specific sequences on the pre-mRNA 3'-end, so called cleavage and polyadenylation signals (pA signals). Most pre-mRNAs contain multiple pA signals, resulting in alternative cleavage and polyadenylation (APA) producing mRNAs with variable 3'-end formation. The CFIm complex acts as a key regulator of cleavage and polyadenylation site choice during APA through its binding to 5'-UGUA-3' elements localized in the 3'-untranslated region (UTR) for a huge number of pre-mRNAs. Binds to 5'-UGUA-3' elements localized upstream of pA signals that act as enhancers of pre-mRNA 3'-end processing. The homodimer mediates simultaneous sequence-specific recognition of two 5'-UGUA-3' elements within the pre-mRNA. Plays a role in somatic cell fate transitions and pluripotency by regulating widespread changes in gene expression through an APA-dependent function. Binds to chromatin. This Dictyostelium discoideum (Social amoeba) protein is Cleavage and polyadenylation specificity factor subunit 5.